We begin with the raw amino-acid sequence, 938 residues long: Isoleucine--tRNA ligase (938 aa).

A 'HIGH' region motif is present at residues 58–68 (PYANGSIHIGH). E561 serves as a coordination point for L-isoleucyl-5'-AMP. The 'KMSKS' region signature appears at 602–606 (KMSKS). K605 provides a ligand contact to ATP. Residues C901, C904, C921, and C924 each coordinate Zn(2+).

It belongs to the class-I aminoacyl-tRNA synthetase family. IleS type 1 subfamily. As to quaternary structure, monomer. It depends on Zn(2+) as a cofactor.

It localises to the cytoplasm. The catalysed reaction is tRNA(Ile) + L-isoleucine + ATP = L-isoleucyl-tRNA(Ile) + AMP + diphosphate. Functionally, catalyzes the attachment of isoleucine to tRNA(Ile). As IleRS can inadvertently accommodate and process structurally similar amino acids such as valine, to avoid such errors it has two additional distinct tRNA(Ile)-dependent editing activities. One activity is designated as 'pretransfer' editing and involves the hydrolysis of activated Val-AMP. The other activity is designated 'posttransfer' editing and involves deacylation of mischarged Val-tRNA(Ile). The sequence is that of Isoleucine--tRNA ligase from Erwinia tasmaniensis (strain DSM 17950 / CFBP 7177 / CIP 109463 / NCPPB 4357 / Et1/99).